Reading from the N-terminus, the 363-residue chain is uncharacterized protein (363 aa).

This is an uncharacterized protein from Saccharomyces cerevisiae (strain ATCC 204508 / S288c) (Baker's yeast).